The following is a 602-amino-acid chain: Beta-(1--&gt;2)glucan export ATP-binding/permease protein NdvA (602 aa).

One can recognise an ABC transmembrane type-1 domain in the interval 21 to 311 (GWVLAGANLL…VVGFVNSVFM (291 aa)). The next 6 membrane-spanning stretches (helical) occupy residues 22–42 (WVLA…PVLF), 68–88 (LLLA…AVAL), 146–166 (EHFA…YINW), 167–187 (RLAL…TLVV), 238–258 (LLAM…ITRA), and 285–305 (IVMF…VVGF). The region spanning 345–579 (VEFDNVSFSY…RGYFAELAHA (235 aa)) is the ABC transporter domain. 378–385 (GATGAGKS) lines the ATP pocket.

The protein belongs to the ABC transporter superfamily. Beta-(1--&gt;2)glucan exporter (TC 3.A.1.108.1) family. As to quaternary structure, homodimer.

It localises to the cell inner membrane. The catalysed reaction is [(1-&gt;2)-beta-D-glucosyl](n)(in) + ATP + H2O = [(1-&gt;2)-beta-D-glucosyl](n)(out) + ADP + phosphate + H(+). In terms of biological role, involved in Beta-(1--&gt;2)glucan export. Transmembrane domains (TMD) form a pore in the inner membrane and the ATP-binding domain (NBD) is responsible for energy generation. The sequence is that of Beta-(1--&gt;2)glucan export ATP-binding/permease protein NdvA from Rhodopseudomonas palustris (strain BisA53).